The chain runs to 100 residues: Small ribosomal subunit protein uS14c (100 aa).

Belongs to the universal ribosomal protein uS14 family. Part of the 30S ribosomal subunit.

Its subcellular location is the plastid. It localises to the chloroplast. In terms of biological role, binds 16S rRNA, required for the assembly of 30S particles. In Zygnema circumcarinatum (Green alga), this protein is Small ribosomal subunit protein uS14c.